The following is a 978-amino-acid chain: Exocyst complex component 5 (978 aa).

Residues 1–11 (MSWARNIQSRI) are compositionally biased toward polar residues. Disordered regions lie at residues 1–87 (MSWA…TTTQ) and 122–246 (TSPS…TTPY). Composition is skewed to low complexity over residues 36-52 (PSSP…TSLT) and 62-86 (SQPT…TTTT). Over residues 122 to 142 (TSPSMASPIGTSTGIQNPNAK) the composition is skewed to polar residues. Residues 143–245 (PSSLPSPSQS…QPTPIKQTTP (103 aa)) are compositionally biased toward low complexity. A coiled-coil region spans residues 303–325 (NTQLQLSQLESNIDRRLDDLAEE).

It belongs to the SEC10 family. As to quaternary structure, the exocyst complex is composed of sec3/exoc1, sec5/exoc2, sec6/exoc3, sec8/exoc4, sec10/exoc5, sec15/exoc6, exo70/exoc7 and exo84/exoc8.

Functionally, component of the exocyst complex involved in the docking of exocytic vesicles with fusion sites on the plasma membrane. The sequence is that of Exocyst complex component 5 (exoc5) from Dictyostelium discoideum (Social amoeba).